Consider the following 94-residue polypeptide: Cytochrome c-551 (94 aa).

The first 14 residues, 1–14 (MAFTAMTVAPSALA), serve as a signal peptide directing secretion. Heme c-binding residues include cysteine 24, cysteine 27, histidine 28, and methionine 73.

In terms of processing, binds 1 heme c group covalently per subunit.

Functionally, efficiently couple electron transfer between the cytochrome bc1 complex and the photosynthetic reaction center. This is Cytochrome c-551 from Allochromatium vinosum (strain ATCC 17899 / DSM 180 / NBRC 103801 / NCIMB 10441 / D) (Chromatium vinosum).